A 491-amino-acid polypeptide reads, in one-letter code: ATP synthase subunit beta, chloroplastic (491 aa).

163-170 (GGAGVGKT) contacts ATP.

This sequence belongs to the ATPase alpha/beta chains family. F-type ATPases have 2 components, CF(1) - the catalytic core - and CF(0) - the membrane proton channel. CF(1) has five subunits: alpha(3), beta(3), gamma(1), delta(1), epsilon(1). CF(0) has four main subunits: a(1), b(1), b'(1) and c(9-12).

Its subcellular location is the plastid. The protein localises to the chloroplast thylakoid membrane. The enzyme catalyses ATP + H2O + 4 H(+)(in) = ADP + phosphate + 5 H(+)(out). Its function is as follows. Produces ATP from ADP in the presence of a proton gradient across the membrane. The catalytic sites are hosted primarily by the beta subunits. The protein is ATP synthase subunit beta, chloroplastic of Nephroselmis olivacea (Green alga).